Reading from the N-terminus, the 165-residue chain is MRLLVVAIGRLKNGPERDLAARYRERAVALGKGLGVTACDLTEIPESRARRSADRIAEEAAAILALVPADAAVIACDERGRSDWPSERIADKIGAWRDAGRSTLVLVVGGADGLHETVRGRADHILAFGAATLPHGLVRVLALEQVYRALTILAGHPYHRGDPEA.

G109 is a binding site for S-adenosyl-L-methionine.

This sequence belongs to the RNA methyltransferase RlmH family. As to quaternary structure, homodimer.

It is found in the cytoplasm. The enzyme catalyses pseudouridine(1915) in 23S rRNA + S-adenosyl-L-methionine = N(3)-methylpseudouridine(1915) in 23S rRNA + S-adenosyl-L-homocysteine + H(+). Functionally, specifically methylates the pseudouridine at position 1915 (m3Psi1915) in 23S rRNA. This is Ribosomal RNA large subunit methyltransferase H from Methylorubrum extorquens (strain CM4 / NCIMB 13688) (Methylobacterium extorquens).